The sequence spans 360 residues: F-box protein SKP2B (360 aa).

Residues 25 to 76 enclose the F-box domain; sequence ISEWKDIPVELLMKILNLVDDRTVIIASCICSGWRDAVSLGLTRLSLSWCKK. LRR repeat units follow at residues 77–99, 101–126, 127–152, 153–178, 180–205, 206–231, 232–257, 258–301, and 302–333; these read NMNS…VLRQ, KPQL…DLSK, SSKI…NLSG, CTSF…NLCG, VEAV…NLGW, CENI…DLCS, CVLI…GLYY, CRNI…NISQ, and CTYL…VMSG.

In terms of biological role, component of SCF(SKP2B) E3 ubiquitin ligase complexes, which mediate the ubiquitination and subsequent proteasomal degradation of the cyclin-dependent kinase inhibitor KRP1. Does not interact with auxin. In Arabidopsis thaliana (Mouse-ear cress), this protein is F-box protein SKP2B (SKP2B).